An 883-amino-acid polypeptide reads, in one-letter code: Putative GTP diphosphokinase RSH1, chloroplastic (883 aa).

The N-terminal 55 residues, 1-55 (MTSASSMSVSVECVNICNLTKGDGNARSDCSALSCAWKAPRALTGFLASTAHPPV), are a transit peptide targeting the chloroplast. Residues 172 to 279 (FIIHPVAVAR…VKLADRLHNM (108 aa)) enclose the HD domain. One can recognise a TGS domain in the interval 562–625 (LGSRVFVFTP…ENAEVVEIVT (64 aa)). The span at 710–726 (QSQDKSRDTTPAPQNGS) shows a compositional bias: polar residues. The disordered stretch occupies residues 710-746 (QSQDKSRDTTPAPQNGSVWAPKVNGKHNKAIKNSSSD). Residues 796-867 (WLCVVSMDRK…LVLGVLGWSS (72 aa)) form the ACT domain.

This sequence belongs to the RelA/SpoT family. Interacts with RPP5.

It localises to the plastid. It is found in the chloroplast. It carries out the reaction GTP + ATP = guanosine 3'-diphosphate 5'-triphosphate + AMP. May be involved in a rapid plant ppGpp (guanosine 3'-diphosphate 5'-diphosphate)-mediated response to pathogens and other stresses. In Arabidopsis thaliana (Mouse-ear cress), this protein is Putative GTP diphosphokinase RSH1, chloroplastic (RSH1).